The chain runs to 596 residues: Uptake hydrogenase large subunit (596 aa).

The Ni(2+) site is built by cysteine 75, cysteine 78, cysteine 575, and cysteine 578.

Belongs to the [NiFe]/[NiFeSe] hydrogenase large subunit family. As to quaternary structure, heterodimer of a large and a small subunit. It depends on Ni(2+) as a cofactor.

It is found in the cell membrane. The catalysed reaction is H2 + A = AH2. In terms of biological role, this enzyme recycles the H(2) produced by nitrogenase to increase the production of ATP and to protect nitrogenase against inhibition or damage by O(2) under carbon- or phosphate-limited conditions. This is Uptake hydrogenase large subunit (hupB) from Rhizobium leguminosarum bv. viciae.